A 906-amino-acid chain; its full sequence is Peroxisomal hydratase-dehydrogenase-epimerase (906 aa).

2 short-chain dehydrogenase like regions span residues 5–228 (DFKD…SSAE) and 319–532 (SLKD…GTDD). NADP(+) contacts are provided by isoleucine 13, lysine 52, asparagine 98, and lysine 131. Residues serine 149 and tyrosine 163 each act as proton donor in the active site. 2 residues coordinate NADP(+): tyrosine 163 and lysine 167. Tyrosine 163 (proton acceptor) is an active-site residue. Lysine 167 serves as the catalytic Lowers pKa of active site Tyr. Residue tyrosine 467 is the Proton acceptor of the active site. A disordered region spans residues 600-633 (AVGGDDDDDDEDEEEDEGDEEEDEEDEEEDDPVW). The span at 603–630 (GDDDDDDEDEEEDEGDEEEDEEDEEEDD) shows a compositional bias: acidic residues. Residues histidine 699, glycine 700, lysine 729, tyrosine 757, aspartate 808, asparagine 810, glycine 831, phenylalanine 856, threonine 857, and glycine 858 each coordinate (3R)-3-hydroxydecanoyl-CoA. The MaoC-like domain maps to 782–893 (APKRAPDYQV…VVDRGTIAIN (112 aa)). A Microbody targeting signal motif is present at residues 904 to 906 (AKI).

It belongs to the short-chain dehydrogenases/reductases (SDR) family. In terms of assembly, monomer.

Its subcellular location is the peroxisome. It carries out the reaction a (3R)-3-hydroxyacyl-CoA = a (2E)-enoyl-CoA + H2O. The catalysed reaction is a (3R)-3-hydroxyacyl-CoA + NAD(+) = a 3-oxoacyl-CoA + NADH + H(+). It participates in lipid metabolism; fatty acid beta-oxidation. Second trifunctional enzyme acting on the beta-oxidation pathway for fatty acids, possessing hydratase-dehydrogenase-epimerase activities. Converts trans-2-enoyl-CoA via D-3-hydroxyacyl-CoA to 3-ketoacyl-CoA. This Candida tropicalis (Yeast) protein is Peroxisomal hydratase-dehydrogenase-epimerase.